The primary structure comprises 325 residues: tRNA(Ile)-lysidine synthase (325 aa).

ATP is bound at residue 34–39 (SGGQDS).

It belongs to the tRNA(Ile)-lysidine synthase family.

It localises to the cytoplasm. It carries out the reaction cytidine(34) in tRNA(Ile2) + L-lysine + ATP = lysidine(34) in tRNA(Ile2) + AMP + diphosphate + H(+). In terms of biological role, ligates lysine onto the cytidine present at position 34 of the AUA codon-specific tRNA(Ile) that contains the anticodon CAU, in an ATP-dependent manner. Cytidine is converted to lysidine, thus changing the amino acid specificity of the tRNA from methionine to isoleucine. In Synechococcus sp. (strain ATCC 27144 / PCC 6301 / SAUG 1402/1) (Anacystis nidulans), this protein is tRNA(Ile)-lysidine synthase.